The sequence spans 183 residues: Negative modulator of initiation of replication (183 aa).

The interaction with DNA stretch occupies residues arginine 118–tyrosine 122.

Belongs to the SeqA family. Homodimer. Polymerizes to form helical filaments.

Its subcellular location is the cytoplasm. Negative regulator of replication initiation, which contributes to regulation of DNA replication and ensures that replication initiation occurs exactly once per chromosome per cell cycle. Binds to pairs of hemimethylated GATC sequences in the oriC region, thus preventing assembly of replication proteins and re-initiation at newly replicated origins. Repression is relieved when the region becomes fully methylated. In Proteus mirabilis (strain HI4320), this protein is Negative modulator of initiation of replication.